The following is a 115-amino-acid chain: U31-theraphotoxin-Cg1a (115 aa).

The first 18 residues, 1 to 18 (MKLCVIIIASLMVASVSG), serve as a signal peptide directing secretion. The propeptide occupies 19 to 51 (RLRKIKGTELDKKMLLEKLGHGMDIRFEETPRA). Intrachain disulfides connect C52–C67, C60–C73, C64–C113, and C66–C86.

It belongs to the neurotoxin 03 (Tx2) family. 02 subfamily. As to expression, expressed by the venom gland.

It localises to the secreted. Probable ion channel inhibitor. This Chilobrachys guangxiensis (Chinese earth tiger tarantula) protein is U31-theraphotoxin-Cg1a.